The primary structure comprises 113 residues: Meiotically up-regulated gene 98 protein, mitochondrial (113 aa).

It localises to the mitochondrion. Functionally, has a role in meiosis. The protein is Meiotically up-regulated gene 98 protein, mitochondrial (mug98) of Schizosaccharomyces pombe (strain 972 / ATCC 24843) (Fission yeast).